The primary structure comprises 426 residues: Delta-aminolevulinic acid dehydratase, chloroplastic (426 aa).

The N-terminal 45 residues, methionine 1–arginine 45, are a transit peptide targeting the chloroplast. A disordered region spans residues glycine 74–arginine 107. Catalysis depends on lysine 293, which acts as the Schiff-base intermediate with substrate. The 5-aminolevulinate site is built by arginine 303 and lysine 315. Glutamate 331 provides a ligand contact to Mg(2+). Lysine 346 serves as the catalytic Schiff-base intermediate with substrate. 2 residues coordinate 5-aminolevulinate: serine 372 and tyrosine 411.

It belongs to the ALAD family. Homooctamer. The cofactor is Mg(2+).

Its subcellular location is the plastid. The protein resides in the chloroplast. The catalysed reaction is 2 5-aminolevulinate = porphobilinogen + 2 H2O + H(+). It participates in porphyrin-containing compound metabolism; protoporphyrin-IX biosynthesis; coproporphyrinogen-III from 5-aminolevulinate: step 1/4. In terms of biological role, catalyzes an early step in the biosynthesis of tetrapyrroles. Binds two molecules of 5-aminolevulinate per subunit, each at a distinct site, and catalyzes their condensation to form porphobilinogen. This is Delta-aminolevulinic acid dehydratase, chloroplastic (HEMB) from Oryza sativa subsp. japonica (Rice).